A 654-amino-acid polypeptide reads, in one-letter code: DNA ligase (654 aa).

Residues 34 to 38, 83 to 84, and Glu-114 contribute to the NAD(+) site; these read DLEYD and SL. The active-site N6-AMP-lysine intermediate is Lys-116. Positions 137, 171, 280, and 304 each coordinate NAD(+). The Zn(2+) site is built by Cys-396, Cys-399, Cys-414, and Cys-419. Residues 577-654 enclose the BRCT domain; sequence VISTILSGYT…EEQFYDLIKQ (78 aa).

This sequence belongs to the NAD-dependent DNA ligase family. LigA subfamily. Mg(2+) is required as a cofactor. The cofactor is Mn(2+).

It catalyses the reaction NAD(+) + (deoxyribonucleotide)n-3'-hydroxyl + 5'-phospho-(deoxyribonucleotide)m = (deoxyribonucleotide)n+m + AMP + beta-nicotinamide D-nucleotide.. Its function is as follows. DNA ligase that catalyzes the formation of phosphodiester linkages between 5'-phosphoryl and 3'-hydroxyl groups in double-stranded DNA using NAD as a coenzyme and as the energy source for the reaction. It is essential for DNA replication and repair of damaged DNA. In Mycoplasmopsis agalactiae (strain NCTC 10123 / CIP 59.7 / PG2) (Mycoplasma agalactiae), this protein is DNA ligase.